Here is a 510-residue protein sequence, read N- to C-terminus: ATP synthase subunit alpha (510 aa).

Position 169-176 (glycine 169–threonine 176) interacts with ATP.

Belongs to the ATPase alpha/beta chains family. In terms of assembly, F-type ATPases have 2 components, CF(1) - the catalytic core - and CF(0) - the membrane proton channel. CF(1) has five subunits: alpha(3), beta(3), gamma(1), delta(1), epsilon(1). CF(0) has three main subunits: a(1), b(2) and c(9-12). The alpha and beta chains form an alternating ring which encloses part of the gamma chain. CF(1) is attached to CF(0) by a central stalk formed by the gamma and epsilon chains, while a peripheral stalk is formed by the delta and b chains.

The protein localises to the cell inner membrane. The catalysed reaction is ATP + H2O + 4 H(+)(in) = ADP + phosphate + 5 H(+)(out). Functionally, produces ATP from ADP in the presence of a proton gradient across the membrane. The alpha chain is a regulatory subunit. The chain is ATP synthase subunit alpha from Anaeromyxobacter sp. (strain K).